A 772-amino-acid chain; its full sequence is Polyribonucleotide nucleotidyltransferase (772 aa).

Positions 486 and 492 each coordinate Mg(2+). A KH domain is found at Pro-553 to Ile-612. Residues Gly-622–Arg-690 form the S1 motif domain. Positions Glu-695–Asp-772 are disordered. Positions Glu-701–Ala-760 are enriched in basic and acidic residues.

The protein belongs to the polyribonucleotide nucleotidyltransferase family. Requires Mg(2+) as cofactor.

The protein resides in the cytoplasm. It catalyses the reaction RNA(n+1) + phosphate = RNA(n) + a ribonucleoside 5'-diphosphate. In terms of biological role, involved in mRNA degradation. Catalyzes the phosphorolysis of single-stranded polyribonucleotides processively in the 3'- to 5'-direction. The sequence is that of Polyribonucleotide nucleotidyltransferase from Novosphingobium aromaticivorans (strain ATCC 700278 / DSM 12444 / CCUG 56034 / CIP 105152 / NBRC 16084 / F199).